Here is a 323-residue protein sequence, read N- to C-terminus: Ubiquinone biosynthesis protein COQ4, mitochondrial (323 aa).

4 residues coordinate Zn(2+): H205, D206, H209, and E221.

The protein belongs to the COQ4 family. In terms of assembly, component of a multi-subunit COQ enzyme complex, composed of at least COQ3, COQ4, COQ5, COQ6, COQ7 and COQ9. Requires Zn(2+) as cofactor.

It is found in the mitochondrion inner membrane. It catalyses the reaction a 4-hydroxy-3-methoxy-5-(all-trans-polyprenyl)benzoate + H(+) = a 2-methoxy-6-(all-trans-polyprenyl)phenol + CO2. It functions in the pathway cofactor biosynthesis; ubiquinone biosynthesis. Its function is as follows. Lyase that catalyzes the C1-decarboxylation of 4-hydroxy-3-methoxy-5-(all-trans-polyprenyl)benzoic acid into 2-methoxy-6-(all-trans-polyprenyl)phenol during ubiquinone biosynthesis. In Candida albicans (strain SC5314 / ATCC MYA-2876) (Yeast), this protein is Ubiquinone biosynthesis protein COQ4, mitochondrial.